A 344-amino-acid polypeptide reads, in one-letter code: Dihydroorotase (344 aa).

Zn(2+) is bound by residues H14 and H16. Substrate-binding positions include 16–18 and N42; that span reads HLR. K100, H137, and H175 together coordinate Zn(2+). An N6-carboxylysine modification is found at K100. A substrate-binding site is contributed by H137. L220 contributes to the substrate binding site. D248 contacts Zn(2+). D248 is a catalytic residue. Substrate-binding residues include H252 and A264.

Belongs to the metallo-dependent hydrolases superfamily. DHOase family. Class II DHOase subfamily. In terms of assembly, homodimer. Zn(2+) serves as cofactor.

The catalysed reaction is (S)-dihydroorotate + H2O = N-carbamoyl-L-aspartate + H(+). The protein operates within pyrimidine metabolism; UMP biosynthesis via de novo pathway; (S)-dihydroorotate from bicarbonate: step 3/3. Functionally, catalyzes the reversible cyclization of carbamoyl aspartate to dihydroorotate. The protein is Dihydroorotase of Cupriavidus metallidurans (strain ATCC 43123 / DSM 2839 / NBRC 102507 / CH34) (Ralstonia metallidurans).